A 101-amino-acid polypeptide reads, in one-letter code: DNA-binding protein Fis (101 aa).

Residues 77–96 (QTRAANMLGINRGTLRKKLK) constitute a DNA-binding region (H-T-H motif).

This sequence belongs to the transcriptional regulatory Fis family. Homodimer.

Activates ribosomal RNA transcription. Plays a direct role in upstream activation of rRNA promoters. The protein is DNA-binding protein Fis of Shewanella halifaxensis (strain HAW-EB4).